A 248-amino-acid chain; its full sequence is Ubiquinone biosynthesis O-methyltransferase (248 aa).

S-adenosyl-L-methionine contacts are provided by R41, G72, D93, and M136.

Belongs to the methyltransferase superfamily. UbiG/COQ3 family.

The catalysed reaction is a 3-demethylubiquinol + S-adenosyl-L-methionine = a ubiquinol + S-adenosyl-L-homocysteine + H(+). It catalyses the reaction a 3-(all-trans-polyprenyl)benzene-1,2-diol + S-adenosyl-L-methionine = a 2-methoxy-6-(all-trans-polyprenyl)phenol + S-adenosyl-L-homocysteine + H(+). It functions in the pathway cofactor biosynthesis; ubiquinone biosynthesis. O-methyltransferase that catalyzes the 2 O-methylation steps in the ubiquinone biosynthetic pathway. The protein is Ubiquinone biosynthesis O-methyltransferase of Brucella anthropi (strain ATCC 49188 / DSM 6882 / CCUG 24695 / JCM 21032 / LMG 3331 / NBRC 15819 / NCTC 12168 / Alc 37) (Ochrobactrum anthropi).